Here is a 557-residue protein sequence, read N- to C-terminus: MMSLNLAHQTGAAAAVAPAAPRTAVVAAAAGTVSAPAVAPAAAPSLQLQTQTVDPAAPAQGPDLPMAFQALVESLPEEQHPDVGGEERRKVGVPVYVMMPLDTVRKDGNGLNRRKAVEASLKALKSAGAEGIMVDVWWGIAECEGPGRYNFTGYMELMEMAKKNGLKVQAVMSFHQCGGNVGDSVTIPLPKWVLEEMDKDQDLAYTDRSGRRNYEYLSLGADAMPVLKGRTPVQCYGDFMRAFRDHFAAFMGNTIVEIQVGMGPAGELRYPSYPESNGTWRFPGIGEFQCYDRYMLSSLKAAAEAVGKPEWGNAGPGDSGGYNDWPEDSPFFRREGGWNTPYGEFFMSWYSQMLLEHGERILSAASGVYTGTPGVKISVKVAGIHWHYGTRSHAAELTAGYYNTRHHDGYQPIARMLARHGAVLNFTCVEMRNHEQPQDAQCRPEELVQQVAAAARESGVGLAGENALPRYDETAHDQIVTTAAEKAEEERMVAFTYLRMGPDLFQPDNWRRFAAFVKRMTESGVRDVCREQVEREAQGVAHATGSLVHEAAVALSN.

The transit peptide at 1-38 (MMSLNLAHQTGAAAAVAPAAPRTAVVAAAAGTVSAPAV) directs the protein to the chloroplast. Residues Asp-135, His-175, and Asp-183 each coordinate substrate. The active-site Proton donor is the Glu-267. Residues Lys-380, His-385, and Thr-427 each contribute to the substrate site. Glu-465 serves as the catalytic Proton acceptor. Substrate is bound by residues 466-467 (NA) and Arg-499.

It belongs to the glycosyl hydrolase 14 family.

The protein resides in the plastid. Its subcellular location is the chloroplast. The catalysed reaction is Hydrolysis of (1-&gt;4)-alpha-D-glucosidic linkages in polysaccharides so as to remove successive maltose units from the non-reducing ends of the chains.. In terms of biological role, possesses beta-amylase activity in vitro. May be involved in cold resistance by mediating the accumulation of maltose upon freezing stress, thus contributing to the protection of membranes. This Oryza sativa subsp. japonica (Rice) protein is Beta-amylase 2, chloroplastic.